The following is a 474-amino-acid chain: Glutamate--tRNA ligase (474 aa).

The 'HIGH' region motif lies at 11–21 (PSPTGFLHIGG). Residues 240-244 (KLSKR) carry the 'KMSKS' region motif. Lys-243 contacts ATP.

Belongs to the class-I aminoacyl-tRNA synthetase family. Glutamate--tRNA ligase type 1 subfamily. In terms of assembly, monomer.

Its subcellular location is the cytoplasm. It catalyses the reaction tRNA(Glu) + L-glutamate + ATP = L-glutamyl-tRNA(Glu) + AMP + diphosphate. Catalyzes the attachment of glutamate to tRNA(Glu) in a two-step reaction: glutamate is first activated by ATP to form Glu-AMP and then transferred to the acceptor end of tRNA(Glu). The sequence is that of Glutamate--tRNA ligase from Bradyrhizobium sp. (strain BTAi1 / ATCC BAA-1182).